The following is a 389-amino-acid chain: Glutaryl-CoA dehydrogenase (389 aa).

Residues Arg-87 and Asn-91 each coordinate substrate. FAD contacts are provided by residues 126 to 129 (FGIT), Ser-135, and 159 to 161 (WIS). Ser-135 serves as a coordination point for substrate. Ser-181 contacts substrate. Residues Arg-271, 281–284 (FQMN), Arg-340, Ala-344, and 367–371 (EGSAN) contribute to the FAD site. Glu-367 acts as the Proton acceptor in catalysis. A substrate-binding site is contributed by Arg-385.

The protein belongs to the acyl-CoA dehydrogenase family. Homotetramer. FAD serves as cofactor.

It carries out the reaction glutaryl-CoA + A = (2E)-glutaconyl-CoA + AH2. It functions in the pathway aromatic compound metabolism; benzoyl-CoA degradation. Inhibited by glutaconyl-CoA. Its function is as follows. Catalyzes the dehydrogenation of Glutaryl-CoA to glutaconyl-CoA. The chain is Glutaryl-CoA dehydrogenase (Acd) from Desulfococcus multivorans.